A 225-amino-acid chain; its full sequence is NAD(P)H-quinone oxidoreductase subunit K, chloroplastic (225 aa).

Residues C43, C44, C108, and C139 each coordinate [4Fe-4S] cluster.

The protein belongs to the complex I 20 kDa subunit family. As to quaternary structure, NDH is composed of at least 16 different subunits, 5 of which are encoded in the nucleus. [4Fe-4S] cluster is required as a cofactor.

It localises to the plastid. The protein resides in the chloroplast thylakoid membrane. The catalysed reaction is a plastoquinone + NADH + (n+1) H(+)(in) = a plastoquinol + NAD(+) + n H(+)(out). The enzyme catalyses a plastoquinone + NADPH + (n+1) H(+)(in) = a plastoquinol + NADP(+) + n H(+)(out). Functionally, NDH shuttles electrons from NAD(P)H:plastoquinone, via FMN and iron-sulfur (Fe-S) centers, to quinones in the photosynthetic chain and possibly in a chloroplast respiratory chain. The immediate electron acceptor for the enzyme in this species is believed to be plastoquinone. Couples the redox reaction to proton translocation, and thus conserves the redox energy in a proton gradient. In Oenothera argillicola (Appalachian evening primrose), this protein is NAD(P)H-quinone oxidoreductase subunit K, chloroplastic.